A 246-amino-acid chain; its full sequence is Pyridoxine 5'-phosphate synthase (246 aa).

2 residues coordinate 3-amino-2-oxopropyl phosphate: asparagine 8 and arginine 19. The Proton acceptor role is filled by histidine 44. Residues arginine 46 and histidine 51 each coordinate 1-deoxy-D-xylulose 5-phosphate. Glutamate 76 functions as the Proton acceptor in the catalytic mechanism. Threonine 106 serves as a coordination point for 1-deoxy-D-xylulose 5-phosphate. Catalysis depends on histidine 198, which acts as the Proton donor. Residues aspartate 199 and 221 to 222 (GH) each bind 3-amino-2-oxopropyl phosphate.

Belongs to the PNP synthase family. Homooctamer; tetramer of dimers.

It is found in the cytoplasm. The enzyme catalyses 3-amino-2-oxopropyl phosphate + 1-deoxy-D-xylulose 5-phosphate = pyridoxine 5'-phosphate + phosphate + 2 H2O + H(+). It functions in the pathway cofactor biosynthesis; pyridoxine 5'-phosphate biosynthesis; pyridoxine 5'-phosphate from D-erythrose 4-phosphate: step 5/5. In terms of biological role, catalyzes the complicated ring closure reaction between the two acyclic compounds 1-deoxy-D-xylulose-5-phosphate (DXP) and 3-amino-2-oxopropyl phosphate (1-amino-acetone-3-phosphate or AAP) to form pyridoxine 5'-phosphate (PNP) and inorganic phosphate. This Mesorhizobium japonicum (strain LMG 29417 / CECT 9101 / MAFF 303099) (Mesorhizobium loti (strain MAFF 303099)) protein is Pyridoxine 5'-phosphate synthase.